We begin with the raw amino-acid sequence, 1036 residues long: Lethal(2) giant larvae protein homolog 1 (1036 aa).

WD repeat units lie at residues 38 to 71 (SALA…FTGL), 78 to 119 (VTQM…GLSF), 139 to 175 (VTVV…GQTL), 199 to 233 (SLQG…EHVF), 239 to 271 (LESL…GSPP), 289 to 331 (AINK…ETLV), 339 to 373 (VIDF…VLDL), 395 to 473 (TCSA…YKLS), 517 to 592 (QKVA…RMLI), and 601 to 662 (TAVT…LRQS). Phosphoserine is present on S662. A compositionally biased stretch (basic residues) spans 667–677 (RKSRVSGKKRT). The disordered stretch occupies residues 667–688 (RKSRVSGKKRTPAASSKLQEAN). Over residues 679-688 (AASSKLQEAN) the composition is skewed to polar residues. WD repeat units follow at residues 722 to 782 (VRCL…KEVQ), 791 to 843 (AIAV…VSAK), 848 to 901 (LTAH…VHYS), and 915 to 938 (VFTR…SLSA). T957 is modified (phosphothreonine). 3 positions are modified to phosphoserine: S964, S982, and S989. The interval 980-1002 (PESCEGSPSSAHSKRADTMEPPE) is disordered.

This sequence belongs to the WD repeat L(2)GL family. As to quaternary structure, associated with nonmuscle myosin II heavy chain. Interacts with PRKCI/aPKC, PARD6B/Par-6 and PARD6A. Interacts with STX4A. Interacts with RAB10 (GDP-bound form); the interaction is direct and promotes RAB10 association with membranes and activation through competition with the Rab inhibitor GDI1. Interacts with DCAF1. Post-translationally, phosphorylated by PRKCI. Widely expressed. Expressed in brain, ovary, testis, with moderate expression in lever, uterus, lung and kidney.

It localises to the early endosome membrane. Its subcellular location is the golgi apparatus. The protein localises to the trans-Golgi network membrane. The protein resides in the cell projection. It is found in the axon. It localises to the golgi apparatus membrane. Its subcellular location is the cytoplasm. The protein localises to the cytoskeleton. Cortical cytoskeleton protein found in a complex involved in maintaining cell polarity and epithelial integrity. Involved in the regulation of mitotic spindle orientation, proliferation, differentiation and tissue organization of neuroepithelial cells. Involved in axonogenesis through RAB10 activation thereby regulating vesicular membrane trafficking toward the axonal plasma membrane. The polypeptide is Lethal(2) giant larvae protein homolog 1 (LLGL1) (Bos taurus (Bovine)).